A 368-amino-acid chain; its full sequence is Glutamate 5-kinase (368 aa).

Lysine 15 contributes to the ATP binding site. Positions 55, 143, and 155 each coordinate substrate. Residues 175–176 (SD) and 217–223 (SGGMVSK) each bind ATP. A PUA domain is found at 277-354 (EGRLTIDAGA…DAQEAALGYA (78 aa)).

Belongs to the glutamate 5-kinase family.

The protein resides in the cytoplasm. The enzyme catalyses L-glutamate + ATP = L-glutamyl 5-phosphate + ADP. It functions in the pathway amino-acid biosynthesis; L-proline biosynthesis; L-glutamate 5-semialdehyde from L-glutamate: step 1/2. Functionally, catalyzes the transfer of a phosphate group to glutamate to form L-glutamate 5-phosphate. In Sphingopyxis alaskensis (strain DSM 13593 / LMG 18877 / RB2256) (Sphingomonas alaskensis), this protein is Glutamate 5-kinase.